We begin with the raw amino-acid sequence, 459 residues long: MMPFSVLQVKRLQLELITPAKPTLQEAKFLSDIDDQEGLRFQVPVIMCYKDNPSLNKNCNPVKVIREALSRALVYYYPLAGRLKEGPNRKLMVDCNGEGILFVEASADVTLEQLGDKILPPCPLLEEFLFNFPGSDGIIGCPLLLVQVTCLTCGGFILALRVNHTMCDAPGLLLFLTAIAEMARGAHAPSILPVWERELLFSRDPPRITCAHHEYEDVIDHSDGLYASSNQSNMVQRSFYFGAKEMRVLRKQIPPHLISTCSTFDLITACLWKCRTLALNINPKEAVRVSCIVNARGKHNNVRLPLGYYGNAFAFPAAISKAEPLCKNPLGYALELVKKAKATMNEEYLRSVADLLVLRGRPQYSSTGSYLIVSDNTRAGFGDVNFGWGQPVFAGPAKALDLISFYVQHKNNTEDGILVPMCLPSSAMERFQQELERITQEPKEDICNNLRSTRIMSMM.

Catalysis depends on proton acceptor residues His-164 and Asn-385.

It belongs to the plant acyltransferase family. Highly expressed in the cortex and skin of ripe fruit.

Functionally, involved in the biosynthesis of volatile esters which confer ripe apple fruit flavor. Alcohol acyl transferase that can use a wide range of alcohols as substrate to produce esters. This chain is Alcohol acyl transferase 2, found in Malus domestica (Apple).